Consider the following 399-residue polypeptide: MRFREQFLGGSAAMPGATLQRACRLLVAVCALHLGVTLVYYLSGRDLSRLPQLVGVSSTLQGGTNGAAASKQPPGEQRPRGARPPPPLGVSPKPRPGLDSSPGAASGPGLKSNLSSLPVPTTTGLLSLPACPEESPLLVGPMLIDFNIAVDLELLAKKNPEIKTGGRYSPKDCVSPHKVAIIIPFRNRQEHLKYWLYYLHPILQRQQLDYGIYVINQAGDTMFNRAKLLNIGFQEALKDYDYNCFVFSDVDLIPMDDRNAYRCFSQPRHISVAMDKFGFSLPYVQYFGGVSALSKQQFLAINGFPNNYWGWGGEDDDIFNRLVHKGMSISRPNAVVGRCRMIRHSRDKKNEPNPQRFDRIAHTKETMRFDGLNSLTYKVLDVQRYPLYTQITVDIGTPR.

The Cytoplasmic segment spans residues 1 to 24; that stretch reads MRFREQFLGGSAAMPGATLQRACR. A helical; Signal-anchor for type II membrane protein membrane pass occupies residues 25 to 44; that stretch reads LLVAVCALHLGVTLVYYLSG. Residues 45–399 lie on the Lumenal side of the membrane; the sequence is RDLSRLPQLV…QITVDIGTPR (355 aa). The segment at 61-113 is disordered; the sequence is QGGTNGAAASKQPPGEQRPRGARPPPPLGVSPKPRPGLDSSPGAASGPGLKSN. Pro residues predominate over residues 82 to 95; that stretch reads ARPPPPLGVSPKPR. Asn113 carries N-linked (GlcNAc...) asparagine glycosylation. Residues Cys131 and Cys173 are joined by a disulfide bond. UDP-alpha-D-galactose is bound by residues 184–188, 223–225, 250–251, and Trp311; these read PFRNR, FNR, and VD. Residues Cys244 and Cys263 are joined by a disulfide bond. Asp251 is a binding site for Mn(2+). 313–316 is a binding site for N-acetyl-D-glucosamine; the sequence is GEDD. Residue His344 participates in Mn(2+) binding. 344–346 provides a ligand contact to UDP-alpha-D-galactose; that stretch reads HSR. Position 356 (Arg356) interacts with N-acetyl-D-glucosamine.

This sequence belongs to the glycosyltransferase 7 family. As to quaternary structure, homodimer; and heterodimer with alpha-lactalbumin to form lactose synthase. Interacts (via N-terminal cytoplasmic domain) with UBE2Q1 (via N-terminus); the interaction is direct. The cofactor is Mn(2+). In terms of processing, the soluble form derives from the membrane forms by proteolytic processing.

It localises to the golgi apparatus. The protein resides in the golgi stack membrane. The protein localises to the cell membrane. Its subcellular location is the cell surface. It is found in the cell projection. It localises to the filopodium. The protein resides in the secreted. The enzyme catalyses D-glucose + UDP-alpha-D-galactose = lactose + UDP + H(+). The catalysed reaction is an N-acetyl-beta-D-glucosaminyl derivative + UDP-alpha-D-galactose = a beta-D-galactosyl-(1-&gt;4)-N-acetyl-beta-D-glucosaminyl derivative + UDP + H(+). It catalyses the reaction N-acetyl-D-glucosamine + UDP-alpha-D-galactose = beta-D-galactosyl-(1-&gt;4)-N-acetyl-D-glucosamine + UDP + H(+). It carries out the reaction a beta-D-GlcNAc-(1-&gt;3)-beta-D-Gal-(1-&gt;4)-beta-D-Glc-(1&lt;-&gt;1)-Cer(d18:1(4E)) + UDP-alpha-D-galactose = a neolactoside nLc4Cer(d18:1(4E)) + UDP + H(+). The enzyme catalyses a beta-D-glucosylceramide + UDP-alpha-D-galactose = a beta-D-galactosyl-(1-&gt;4)-beta-D-glucosyl-(1&lt;-&gt;1)-ceramide + UDP + H(+). The catalysed reaction is a neolactoside IV(3)-beta-GlcNAc-nLc4Cer + UDP-alpha-D-galactose = a neolactoside nLc6Cer + UDP + H(+). It functions in the pathway protein modification; protein glycosylation. In terms of biological role, the Golgi complex form catalyzes the production of lactose in the lactating mammary gland and could also be responsible for the synthesis of complex-type N-linked oligosaccharides in many glycoproteins as well as the carbohydrate moieties of glycolipids. Its function is as follows. The cell surface form functions as a recognition molecule during a variety of cell to cell and cell to matrix interactions, as those occurring during development and egg fertilization, by binding to specific oligosaccharide ligands on opposing cells or in the extracellular matrix. The secreted form is responsible for the synthesis of complex-type to N-linked oligosaccharides in many glycoproteins as well as the carbohydrate moieties of glycolipids. This Mus musculus (Mouse) protein is Beta-1,4-galactosyltransferase 1.